The following is a 288-amino-acid chain: Shikimate kinase (288 aa).

81–91 is an ATP binding site; that stretch reads PVASGLKSSSA.

It belongs to the GHMP kinase family. Archaeal shikimate kinase subfamily.

Its subcellular location is the cytoplasm. It carries out the reaction shikimate + ATP = 3-phosphoshikimate + ADP + H(+). It functions in the pathway metabolic intermediate biosynthesis; chorismate biosynthesis; chorismate from D-erythrose 4-phosphate and phosphoenolpyruvate: step 5/7. This chain is Shikimate kinase, found in Methanothrix thermoacetophila (strain DSM 6194 / JCM 14653 / NBRC 101360 / PT) (Methanosaeta thermophila).